A 209-amino-acid polypeptide reads, in one-letter code: MPGAIVEEEKSQIESIKEQLKLEKEDDVVVEDVKDGEEEDDDEDDEDVEVEGEGGNENAKQSRSEKKSRKAVLKLGMKPVSDVSRVTIKRAKNVLFVISKPDVYKSPNAETYVIFGEAKVDDLSSQLQTQAAQRFKMPDVTSMLPNAGSEATMAPLAEEEDEDDVDDTGVEARDIDLVMTQAGVSKAKAVSALKANDGDIVSAIMELTT.

The segment at 23–71 (EKEDDVVVEDVKDGEEEDDDEDDEDVEVEGEGGNENAKQSRSEKKSRKA) is disordered. The span at 25 to 54 (EDDVVVEDVKDGEEEDDDEDDEDVEVEGEG) shows a compositional bias: acidic residues. The NAC-A/B domain occupies 62–127 (SRSEKKSRKA…AKVDDLSSQL (66 aa)). One can recognise a UBA domain in the interval 170-207 (VEARDIDLVMTQAGVSKAKAVSALKANDGDIVSAIMEL).

The protein belongs to the NAC-alpha family.

Functionally, may promote appropriate targeting of ribosome-nascent polypeptide complexes. This is Nascent polypeptide-associated complex subunit alpha-like protein 5 from Arabidopsis thaliana (Mouse-ear cress).